A 720-amino-acid chain; its full sequence is 1,4-alpha-glucan branching enzyme GlgB 2 (720 aa).

The active-site Nucleophile is Asp-398. The active-site Proton donor is Glu-451.

Belongs to the glycosyl hydrolase 13 family. GlgB subfamily. In terms of assembly, monomer.

The catalysed reaction is Transfers a segment of a (1-&gt;4)-alpha-D-glucan chain to a primary hydroxy group in a similar glucan chain.. Its pathway is glycan biosynthesis; glycogen biosynthesis. Its function is as follows. Catalyzes the formation of the alpha-1,6-glucosidic linkages in glycogen by scission of a 1,4-alpha-linked oligosaccharide from growing alpha-1,4-glucan chains and the subsequent attachment of the oligosaccharide to the alpha-1,6 position. The chain is 1,4-alpha-glucan branching enzyme GlgB 2 from Xanthomonas oryzae pv. oryzae (strain KACC10331 / KXO85).